Reading from the N-terminus, the 57-residue chain is Small ribosomal subunit protein bS21B (57 aa).

The segment at 37-57 (RYEKPSARRKRKAEAARKRRR) is disordered. Positions 43–57 (ARRKRKAEAARKRRR) are enriched in basic residues.

Belongs to the bacterial ribosomal protein bS21 family.

The sequence is that of Small ribosomal subunit protein bS21B from Gloeobacter violaceus (strain ATCC 29082 / PCC 7421).